The chain runs to 120 residues: Large ribosomal subunit protein bL19 (120 aa).

This sequence belongs to the bacterial ribosomal protein bL19 family.

Its function is as follows. This protein is located at the 30S-50S ribosomal subunit interface and may play a role in the structure and function of the aminoacyl-tRNA binding site. This chain is Large ribosomal subunit protein bL19, found in Nostoc punctiforme (strain ATCC 29133 / PCC 73102).